Consider the following 193-residue polypeptide: Putative 3-methyladenine DNA glycosylase (193 aa).

The protein belongs to the DNA glycosylase MPG family.

The polypeptide is Putative 3-methyladenine DNA glycosylase (Agrobacterium fabrum (strain C58 / ATCC 33970) (Agrobacterium tumefaciens (strain C58))).